The following is a 77-amino-acid chain: Chaplin-H (77 aa).

The first 25 residues, 1–25 (MLKKVVAAAAATGGLVLAGAGMAVA), serve as a signal peptide directing secretion. The Chaplin domain occupies 36–76 (SPGVLSGNVVQVPVHVPVNVCGNTISVIGLLNPAFGNVCIN). Forms amyloid fibrils in vitro stretches follow at residues 38–54 (GVLS…VPVN) and 57–72 (GNTI…AFGN). C56 and C74 are joined by a disulfide.

The protein belongs to the chaplin family. Short chaplin subfamily. In terms of assembly, homodimer; disulfide linked. About 10% of ChpH isolated from cell wall forms disulfide-bonded homodimers.

It localises to the cell surface. The protein resides in the secreted. Its subcellular location is the cell wall. It is found in the fimbrium. In terms of biological role, one of 8 partially redundant surface-active proteins required for efficient formation of aerial mycelium; the short chaplins assemble into a hydrophobic, amyloidal fibrillar surface layer that envelopes and protects aerial hyphae and spores, presumably anchored to the long chaplins. Chaplins have an overlapping function with the surface-active SapB peptide; chaplins are essential on minimal medium while on rich medium both chaplins and SapB are required for efficient aerial hyphae formation. Chaplins are also involved in cell attachment to a hydrophobic surface. Forms amyloid fibrils in vitro probably composed of stacked beta-sheets. A small chaplin extract (ChpD, ChpE, ChpF, ChpG and ChpH) self-assembles into 2 different amyloids; small fibrils at the air-water interface form an amphipathic membrane that resembles spore-surface structures involved in aerial hyphae formation, and hydrophilic fibrils in solution that resemble the fibers that attach cells to a hydrophobic surface. At the air-water interface the hydrophilic surface is in contact with water (probably equivalent to the peptidoglycan layer), while the hydrophobic face is exposed to the air, making the surface of the aerial hyphae hydrophobic. A minimal chaplin strain capable of forming aerial mycelium/hyphae on minimal medium contains ChpC, ChpE and ChpH. The strain also has restored rodlet formation on the hyphae surface. A small chaplin extract applied to a chaplin-deficient strain restores aerial hyphae formation. The small chaplin extract forms an amyloid-like structure similar to that seen on the surface of cells without rodlets (rdlA-rdlB deletions), and is highly surface active, reducing surface tension from 72 to 26 mJ/m(2), which probably allows escape of hyphae from an aqueous environment into air. In Streptomyces coelicolor (strain ATCC BAA-471 / A3(2) / M145), this protein is Chaplin-H.